We begin with the raw amino-acid sequence, 148 residues long: MPSYTHMPYVRPSAILLGIAFDHAASFLVYGPLMGDIWKRAMSTAPHVEYDAGSKTKKVATTYVSNFLSTAVQSYSIAALLQLTGTVTLKGAFFVGLYVFGASGLPDVVDYMFTESRGTPYILVKTISSLVKSVGLSVALIGYGVRRI.

Transmembrane regions (helical) follow at residues 14 to 34 (AILL…GPLM), 80 to 102 (LLQL…VFGA), and 122 to 142 (ILVK…ALIG).

The protein belongs to the UPF0591 family.

The protein localises to the membrane. The chain is UPF0591 membrane protein C15E1.02c from Schizosaccharomyces pombe (strain 972 / ATCC 24843) (Fission yeast).